An 83-amino-acid polypeptide reads, in one-letter code: Mu-theraphotoxin-Hhn2b 3 (83 aa).

Positions 1 to 21 are cleaved as a signal peptide; the sequence is MKASMFLALAGLVLLFVVCYA. Positions 22 to 48 are excised as a propeptide; the sequence is SESEEKEFPRELISKIFAVDDFKGEVR. Cystine bridges form between C50-C65, C57-C70, and C64-C77. A Leucine amide modification is found at L81.

Belongs to the neurotoxin 10 (Hwtx-1) family. 14 (Hntx-1) subfamily. As to quaternary structure, monomer. Expressed by the venom gland.

It localises to the secreted. Weakly blocks the rat SCN2A/SCN1B (Nav1.2/beta-1) sodium channel (IC(50)=68 uM) and the insect sodium channel para/tipE (IC(50)=4.3 uM), without altering the activation or inactivation kinetics (depressant toxin). The polypeptide is Mu-theraphotoxin-Hhn2b 3 (Cyriopagopus hainanus (Chinese bird spider)).